The primary structure comprises 560 residues: Nuclear receptor subfamily 5 group A member 2 (560 aa).

The disordered stretch occupies residues 17–54 (GLPAIAPAPGSETPHSPKLEEKHREKRAGLPDRHRRPI). The span at 31–48 (HSPKLEEKHREKRAGLPD) shows a compositional bias: basic and acidic residues. Positions 104 to 179 (EELCPVCGDK…VGMKLEAVRA (76 aa)) form a DNA-binding region, nuclear receptor. Zn(2+) contacts are provided by Cys-107, Cys-110, Cys-124, Cys-127, Cys-143, Cys-149, Cys-159, and Cys-162. NR C4-type zinc fingers lie at residues 107-127 (CPVCGDKVSGYHYGLLTCESC) and 143-162 (CIENQNCQIDKTQRKRCPYC). The segment at 173 to 188 (KLEAVRADRMRGGRNK) is C-terminal extension (CTE). Positions 189–208 (FGPMYKRDRALKQQKKALIR) match the FTZ-F1 box motif. Lys-289 is covalently cross-linked (Glycyl lysine isopeptide (Lys-Gly) (interchain with G-Cter in SUMO1)). Positions 319 to 558 (SIPHLILELL…NLLIEMLHAK (240 aa)) constitute an NR LBD domain. A phospholipid derivative-binding residues include Tyr-535 and Lys-539. Residues 547–558 (YNNLLIEMLHAK) form an AF-2 region.

Belongs to the nuclear hormone receptor family. NR5 subfamily. As to quaternary structure, monomer; Binds DNA as a monomer. Interacts with nuclear receptor corepressors NR0B1 and NR0B2; repressing NR5A2 nuclear receptor activity. Interacts with nuclear receptor coactivators CTNNB1, PPARGC1A and NCOA2; interaction takes place following ligand-binding and promotes target gene activation. Interacts (when sumoylated) with GPS2; interaction with GPS2 onto hepatic acute phase protein promoters prevents N-Cor corepressor complex dissociation. Interacts with HNF1A. Interacts with GRIP1. Post-translationally, sumoylated by SUMO1 at Lys-289 during the hepatic acute phase response, leading to promote interaction with GPS2 and prevent N-Cor corepressor complex dissociation.

The protein localises to the nucleus. The protein resides in the chromosome. Its function is as follows. Orphan nuclear receptor that binds DNA as a monomer to the 5'-TCAAGGCCA-3' sequence and controls expression of target genes: regulates key biological processes, such as early embryonic development, cholesterol and bile acid synthesis pathways, as well as liver and pancreas morphogenesis. Ligand-binding causes conformational change which causes recruitment of coactivators, promoting target gene activation. The specific ligand is unknown, but specific phospholipids, such as phosphatidylethanolamine, phosphatidylserine, dilauroyl phosphatidylcholine and diundecanoyl phosphatidylcholine can act as ligand in vitro. Acts as a pioneer transcription factor, which unwraps target DNA from histones and elicits local opening of closed chromatin. Plays a central role during preimplantation stages of embryonic development. Plays a minor role in zygotic genome activation (ZGA) by regulating a small set of two-cell stage genes. Plays a major role in morula development (2-16 cells embryos) by acting as a master regulator at the 8-cell stage, controlling expression of lineage-specifying transcription factors and genes involved in mitosis, telomere maintenance and DNA repair. Zygotic NR5A2 binds to both closed and open chromatin with other transcription factors, often at SINE B1/Alu repeats DNA elements, promoting chromatin accessibility at nearby regulatory regions. Also involved in the epiblast stage of development and embryonic stem cell pluripotency, by promoting expression of POU5F1/OCT4. Regulates other processes later in development, such as formation of connective tissue in lower jaw and middle ear, neural stem cell differentiation, ovarian follicle development and Sertoli cell differentiation. Involved in exocrine pancreas development and acinar cell differentiation. Acts as an essential transcriptional regulator of lipid metabolism. Key regulator of cholesterol 7-alpha-hydroxylase gene (CYP7A) expression in liver. Also acts as a negative regulator of inflammation in different organs, such as, liver and pancreas. Protects against intestinal inflammation via its ability to regulate glucocorticoid production. Plays an anti-inflammatory role during the hepatic acute phase response by acting as a corepressor: inhibits the hepatic acute phase response by preventing dissociation of the N-Cor corepressor complex. Acts as a regulator of immunity by promoting lymphocyte T-cell development, proliferation and effector functions. Also involved in resolution of endoplasmic reticulum stress in the liver. This is Nuclear receptor subfamily 5 group A member 2 from Rattus norvegicus (Rat).